We begin with the raw amino-acid sequence, 424 residues long: Interferon regulatory factor 8 (424 aa).

Residues Gly7–Pro114 constitute a DNA-binding region (IRF tryptophan pentad repeat).

Belongs to the IRF family. Interacts with COPS2. Interacts (via C-terminus) with TRIM21 (via C-terminus). Interacts with the BATF-JUNB heterodimer. Interacts with BATF (via bZIP domain); the interaction is direct. Interacts with SPI1. Ubiquitinated. Ubiquitination by TRIM21 in macrophages, a process that is strongly increased upon interferon gamma stimulation, leds to the enhanced transcriptional activity of target cytokine genes. Ubiquitination leads to its degradation by the proteasome. In terms of processing, sumoylated with SUMO3. Desumoylated by SENP1. As to expression, expressed in bone marrow macrophages (at protein level). Mainly expressed in lymphoid tissues. Predominantly expressed in CD8(+)-expressing dendritic cells.

It is found in the nucleus. The protein localises to the cytoplasm. Functionally, transcription factor that specifically binds to the upstream regulatory region of type I interferon (IFN) and IFN-inducible MHC class I genes (the interferon consensus sequence (ICS)). Can both act as a transcriptional activator or repressor. Plays a negative regulatory role in cells of the immune system. Involved in CD8(+) dendritic cell differentiation by forming a complex with the BATF-JUNB heterodimer in immune cells, leading to recognition of AICE sequence (5'-TGAnTCA/GAAA-3'), an immune-specific regulatory element, followed by cooperative binding of BATF and IRF8 and activation of genes. Required for the development of plasmacytoid dendritic cells (pDCs), which produce most of the type I IFN in response to viral infection. Positively regulates macroautophagy in dendritic cells. Acts as a transcriptional repressor of osteoclast differentiation factors such as NFATC1 and EEIG1. The polypeptide is Interferon regulatory factor 8 (Mus musculus (Mouse)).